Here is a 439-residue protein sequence, read N- to C-terminus: Ribulose bisphosphate carboxylase/oxygenase activase, chloroplastic (439 aa).

167–174 (GGKGQGKS) is an ATP binding site.

The protein belongs to the RuBisCO activase family.

Its subcellular location is the plastid. The protein resides in the chloroplast stroma. Functionally, activation of RuBisCO (ribulose-1,5-bisphosphate carboxylase/oxygenase; EC 4.1.1.39) involves the ATP-dependent carboxylation of the epsilon-amino group of lysine leading to a carbamate structure. The chain is Ribulose bisphosphate carboxylase/oxygenase activase, chloroplastic (RCA) from Vigna radiata var. radiata (Mung bean).